The sequence spans 276 residues: MGIRLYKAYTPGTRNRSVLEFNDITKTNPEKSLTYHRHRSKGRNNRGIITIRHRGGGHKRLCRLIDFTREKNIPATVASIEYDPNRNCRIALLYYKNGIKRYIIHPRGLSVGKEIVSSVEAPLSVGNSLPLNKIPLGTGIHNIELSPGQGGQLARAAGAVAQLIAKEGKFVTVRLPSGEVRLILKECWATIGQVGNVDANNITIGKAGRTRWLGKRPVVRGVVMNPVDHPHGGGEGRSPIGRPKPVSPWGKTALGAKTRKRKKYSDVLIIRRRKSA.

Residues 225 to 256 (NPVDHPHGGGEGRSPIGRPKPVSPWGKTALGA) are disordered.

Belongs to the universal ribosomal protein uL2 family. As to quaternary structure, part of the 50S ribosomal subunit.

Its subcellular location is the plastid. The protein resides in the chloroplast. In Mesostigma viride (Green alga), this protein is Large ribosomal subunit protein uL2c (rpl2).